The primary structure comprises 250 residues: Bcl-2-like protein 12 (250 aa).

A disordered region spans residues 24–46; the sequence is GEAAGSPVPTPPRSPAQEEPTDF. Ser-29 is subject to Phosphoserine. A Phosphothreonine modification is found at Thr-33. At Ser-37 the chain carries Phosphoserine. Position 60 is an omega-N-methylarginine (Arg-60). Phosphoserine is present on residues Ser-111, Ser-158, Ser-159, Ser-161, and Ser-189. The BH2 signature appears at 227–238; that stretch reads WIQAHGGWEGIL.

It belongs to the Bcl-2 family. As to expression, expressed mainly in breast, thymus, prostate, fetal liver, colon, placenta, pancreas, small intestine, spinal cord, kidney, and bone marrow and to a lesser extent in many other tissues. Isoform 2 is primarily expressed in skeletal muscle.

The polypeptide is Bcl-2-like protein 12 (Homo sapiens (Human)).